A 148-amino-acid polypeptide reads, in one-letter code: Myosin light chain 3, skeletal muscle isoform (148 aa).

Thr1 carries the post-translational modification N-acetylthreonine. EF-hand domains lie at 6–41 (DQIEDFKEAFGLFDRIGDSQVAFNQVADIMRALGQN) and 82–117 (GTYDDYVEGLRVFDKEGNGTVMGAELRIVLSTLGEK).

As to quaternary structure, myosin is a hexamer of 2 heavy chains and 4 light chains.

The protein is Myosin light chain 3, skeletal muscle isoform of Chelon ramada (Thin-lipped grey mullet).